Consider the following 594-residue polypeptide: Beta-mannosyltransferase 3 (594 aa).

The Cytoplasmic segment spans residues 1–6 (MRIRSN). A helical transmembrane segment spans residues 7–27 (VLLLSTAGALALVWFAVVFSW). Residues 28–594 (DDKSIFGIPT…KDEVKDTKAK (567 aa)) are Extracellular-facing. N-linked (GlcNAc...) asparagine glycosylation is present at N305. Positions 512–594 (VTRGEEDRLK…KDEVKDTKAK (83 aa)) form a coiled coil. A compositionally biased stretch (basic and acidic residues) spans 517 to 558 (EDRLKNKEKERKIEEKRKKEEERKKKEEEKKKKEEEEKKKKE). A disordered region spans residues 517-564 (EDRLKNKEKERKIEEKRKKEEERKKKEEEKKKKEEEEKKKKEEEEEEE).

Belongs to the BMT family.

Its subcellular location is the membrane. Functionally, beta-mannosyltransferase involved in cell wall biosynthesis. The polypeptide is Beta-mannosyltransferase 3 (BMT3) (Komagataella phaffii (strain ATCC 76273 / CBS 7435 / CECT 11047 / NRRL Y-11430 / Wegner 21-1) (Yeast)).